The chain runs to 1647 residues: MAP kinase-activating death domain protein (1647 aa).

The region spanning 14-268 (YLVIVGARHP…VPVSGQKRVD (255 aa)) is the uDENN domain. A compositionally biased stretch (basic and acidic residues) spans 108 to 122 (EKGEGGAGSRGKEGT). A disordered region spans residues 108 to 168 (EKGEGGAGSR…GKRRAKAGSR (61 aa)). Residues 128-141 (SEEGGTESSESGSS) show a composition bias toward low complexity. Positions 142-157 (LQPLSADSTPDVNQSP) are enriched in polar residues. Serine 156 carries the phosphoserine modification. Residues 158 to 167 (RGKRRAKAGS) show a composition bias toward basic residues. The region spanning 289 to 429 (RFTLVDFPLH…ESLELKKHLK (141 aa)) is the cDENN domain. The dDENN domain occupies 431–565 (ALASMSLNTQ…LNPTNYAFQR (135 aa)). Disordered regions lie at residues 604–636 (ALSV…SSYS) and 678–842 (NQKE…STEG). Residues 615-630 (SEPTDDSGSDSMDYDD) show a composition bias toward acidic residues. Residues serine 689 and serine 692 each carry the phosphoserine modification. Residues 689–699 (SENSQENPPLR) are compositionally biased toward polar residues. Positions 700–712 (SSSSTTASSSPST) are enriched in low complexity. A compositionally biased stretch (basic and acidic residues) spans 750–768 (NVDRRQAEIGEGSVRRRIY). Residues 790–804 (ESYTPRFSQHVSGNR) show a composition bias toward polar residues. Phosphoserine occurs at positions 813, 818, and 820. Residues 827-840 (RASSPNSTVSNTST) are compositionally biased toward low complexity. Residues serine 858, serine 862, serine 916, serine 921, and serine 930 each carry the phosphoserine modification. Disordered regions lie at residues 913 to 941 (QKSS…SSEN), 1051 to 1110 (KEPD…DTRS), and 1146 to 1243 (VFDL…DSEI). The segment covering 932 to 941 (QGRSSNSSEN) has biased composition (polar residues). Serine 1059 carries the post-translational modification Phosphoserine. Phosphothreonine is present on residues threonine 1061 and threonine 1066. A Phosphoserine modification is found at serine 1110. Composition is skewed to polar residues over residues 1158 to 1173 (QISA…SSQR), 1189 to 1207 (RSSS…SSGE), and 1234 to 1243 (SRGTLSDSEI). At threonine 1237 the chain carries Phosphothreonine. Residues serine 1239 and serine 1270 each carry the phosphoserine modification. Residues 1340 to 1415 (GMDQGPQEMI…GLVYSQQINE (76 aa)) enclose the Death domain.

The protein belongs to the MADD family. In terms of assembly, interacts (via death domain) with TNFRSF1A (via death domain). Interacts with PIDD1. Interacts with YWHAZ. Interacts (via death domain) with KIF1B; links the motor KIF1B to Rab3-carrying vesicles in anterograde synaptic vesicle transport. Interacts with KIF1A. Interacts (via uDENN domain) with RAB3A, RAB3B, RAB3C and RAB3D; the GTP-bound form of the Rab proteins is preferred for interaction. As to expression, expressed in testis, ovary, brain and heart. Expressed in spleen, thymus, prostate, testis, ovary, small instestine and colon. Expressed in liver. Not detected in the brain, breast, kidney, lung, ovary, pancreas, testis, uterus, stomach and thyroid. In terms of tissue distribution, expressed in the brain, breast, kidney, lung, ovary, pancreas, testis, uterus, stomach and thyroid.

It is found in the cell membrane. The protein resides in the cytoplasm. It localises to the cell projection. The protein localises to the axon. Its function is as follows. Guanyl-nucleotide exchange factor that regulates small GTPases of the Rab family. Converts GDP-bound inactive form of RAB27A and RAB27B to the GTP-bound active forms. Converts GDP-bound inactive form of RAB3A, RAB3C and RAB3D to the GTP-bound active forms, GTPases involved in synaptic vesicle exocytosis and vesicle secretion. Plays a role in synaptic vesicle formation and in vesicle trafficking at the neuromuscular junction. Involved in up-regulating a post-docking step of synaptic exocytosis in central synapses. Probably by binding to the motor proteins KIF1B and KIF1A, mediates motor-dependent transport of GTP-RAB3A-positive vesicles to the presynaptic nerve terminals. Plays a role in TNFA-mediated activation of the MAPK pathway, including ERK1/2. May link TNFRSF1A with MAP kinase activation. May be involved in the regulation of TNFA-induced apoptosis. The protein is MAP kinase-activating death domain protein of Homo sapiens (Human).